Reading from the N-terminus, the 317-residue chain is MTELPLQFAEPDDDLERVRATLYSLDPDGDRTAGVLRDTLDQLYDGQRTGRWNFDQLHKTEKTHMGTLVEINLHREFQFGDGFETDYEIAGVQVDCKFSMSQGAWMLPPESIGHICLVIWASDQQCAWTAGLVKVIPQFLGTANRDLKRRLTPEGRAQVVKLWPDHGKLQENLLLHIPGDVRDQIFSAKSSRGNQHGQARVNELFRRVHGRLIGRAVIATVAQQDDFMKRVRGSGGARSILRPEGIIILGHQDNDPKVANDLGLPVPRKGQVVAARVVPADEGDQRQTAEIQGRRWAVAVPGDPIVEAPVVPRKSAE.

In terms of assembly, homodimer.

The enzyme catalyses Endonucleolytic cleavage of DNA to give specific double-stranded fragments with terminal 5'-phosphates.. Its function is as follows. An E and P subtype restriction enzyme that recognizes the double-stranded unmethylated sequence 5'-GCCGGC-3' and cleaves after C-3. This Lentzea aerocolonigenes (Lechevalieria aerocolonigenes) protein is Type II restriction enzyme NaeI.